Consider the following 74-residue polypeptide: MNSSIAILLVMALIMFSLDKSYSTDDESGNKCAKTKRRENVCRVCGNRSGNDEYYSECCESDYRYHRCLDLLRN.

A signal peptide spans 1-23 (MNSSIAILLVMALIMFSLDKSYS). 3 disulfides stabilise this stretch: Cys-32–Cys-59, Cys-42–Cys-58, and Cys-45–Cys-68.

Belongs to the scoloptoxin-03 family. In terms of tissue distribution, expressed by the venom gland.

The protein resides in the secreted. Functionally, this toxin inhibits voltage-gated potassium channel currents in DRG neurons (IC(50)=44.2 nM). In vivo, insects injected with this toxin showed signs of neurotoxicity including twitching, paralysis, and body contraction. This Scolopendra mutilans (Chinese red-headed centipede) protein is Kappa-scoloptoxin(03)-Ssm1a.